The primary structure comprises 620 residues: Chaperone protein HscA homolog (620 aa).

This sequence belongs to the heat shock protein 70 family.

Chaperone involved in the maturation of iron-sulfur cluster-containing proteins. Has a low intrinsic ATPase activity which is markedly stimulated by HscB. The sequence is that of Chaperone protein HscA homolog from Acinetobacter baumannii (strain SDF).